The following is a 294-amino-acid chain: Aquaporin NIP2-2 (294 aa).

The next 2 helical transmembrane spans lie at 54 to 74 (VISE…AASI) and 88 to 108 (SVAG…ISGA). An NPA 1 motif is present at residues 111–113 (NPA). 3 consecutive transmembrane segments (helical) span residues 129–151 (VPFY…KAVL), 169–189 (ALLI…AVAT), and 197–217 (LAGL…GPVS). The NPA 2 motif lies at 222 to 224 (NPA). Residues 235-255 (VFTGLWIYFLGPVIGTLSGAW) traverse the membrane as a helical segment.

This sequence belongs to the MIP/aquaporin (TC 1.A.8) family. NIP (TC 1.A.8.12) subfamily.

The protein resides in the membrane. In terms of biological role, aquaporins facilitate the transport of water and small neutral solutes across cell membranes. This Zea mays (Maize) protein is Aquaporin NIP2-2 (NIP2-2).